We begin with the raw amino-acid sequence, 280 residues long: Bifunctional protein FolD (280 aa).

Residues 159–161, Ser184, and Ile225 each bind NADP(+); that span reads GRS.

It belongs to the tetrahydrofolate dehydrogenase/cyclohydrolase family. As to quaternary structure, homodimer.

The catalysed reaction is (6R)-5,10-methylene-5,6,7,8-tetrahydrofolate + NADP(+) = (6R)-5,10-methenyltetrahydrofolate + NADPH. The enzyme catalyses (6R)-5,10-methenyltetrahydrofolate + H2O = (6R)-10-formyltetrahydrofolate + H(+). It functions in the pathway one-carbon metabolism; tetrahydrofolate interconversion. Catalyzes the oxidation of 5,10-methylenetetrahydrofolate to 5,10-methenyltetrahydrofolate and then the hydrolysis of 5,10-methenyltetrahydrofolate to 10-formyltetrahydrofolate. This Methanosphaerula palustris (strain ATCC BAA-1556 / DSM 19958 / E1-9c) protein is Bifunctional protein FolD.